Here is a 423-residue protein sequence, read N- to C-terminus: G protein-activated inward rectifier potassium channel 2 (423 aa).

Residues 1–89 (MAKLTESMTN…IFTTLVDLKW (89 aa)) are Cytoplasmic-facing. Ser16 and Ser23 each carry phosphoserine. Residues 90–114 (RFNLLIFVMVYTVTWLFFGMIWWLI) traverse the membrane as a helical segment. At 115–138 (AYIRGDMDHIEDPSWTPCVTNLNG) the chain is on the extracellular side. The segment at residues 139-150 (FVSAFLFSIETE) is an intramembrane region (helical; Pore-forming). The segment at residues 151–157 (TTIGYGY) is an intramembrane region (pore-forming). A Selectivity filter motif is present at residues 152-157 (TIGYGY). Residues 158–166 (RVITDKCPE) lie on the Extracellular side of the membrane. A helical transmembrane segment spans residues 167 to 188 (GIILLLIQSVLGSIVNAFMVGC). Residues 189 to 423 (MFVKISQPKK…VANLENESKV (235 aa)) lie on the Cytoplasmic side of the membrane. Residues 390–423 (NQHAELETEEEEKNLEEQTERNGDVANLENESKV) are disordered. The PDZ-binding motif lies at 420–423 (ESKV).

The protein belongs to the inward rectifier-type potassium channel (TC 1.A.2.1) family. KCNJ6 subfamily. As to quaternary structure, associates with KCNJ3/GIRK1 or KCNJ5/GRIK4 to form a G-protein-activated heteromultimer pore-forming unit. The resulting inward current is much larger. Interacts (via PDZ-binding motif) with SNX27 (via PDZ domain); the interaction is required when endocytosed to prevent degradation in lysosomes and promote recycling to the plasma membrane.

It localises to the membrane. The catalysed reaction is K(+)(in) = K(+)(out). Its activity is regulated as follows. Activated by phosphatidylinositol 4,5 biphosphate (PtdIns(4,5)P2). Inward rectifier potassium channels are characterized by a greater tendency to allow potassium to flow into the cell rather than out of it. Their voltage dependence is regulated by the concentration of extracellular potassium; as external potassium is raised, the voltage range of the channel opening shifts to more positive voltages. The inward rectification is mainly due to the blockage of outward current by internal magnesium. This potassium channel may be involved in the regulation of insulin secretion by glucose and/or neurotransmitters acting through G-protein-coupled receptors. This is G protein-activated inward rectifier potassium channel 2 (KCNJ6) from Pongo abelii (Sumatran orangutan).